A 351-amino-acid chain; its full sequence is Phosphoribosylformylglycinamidine cyclo-ligase (351 aa).

It belongs to the AIR synthase family.

Its subcellular location is the cytoplasm. The enzyme catalyses 2-formamido-N(1)-(5-O-phospho-beta-D-ribosyl)acetamidine + ATP = 5-amino-1-(5-phospho-beta-D-ribosyl)imidazole + ADP + phosphate + H(+). It functions in the pathway purine metabolism; IMP biosynthesis via de novo pathway; 5-amino-1-(5-phospho-D-ribosyl)imidazole from N(2)-formyl-N(1)-(5-phospho-D-ribosyl)glycinamide: step 2/2. The protein is Phosphoribosylformylglycinamidine cyclo-ligase of Burkholderia vietnamiensis (strain G4 / LMG 22486) (Burkholderia cepacia (strain R1808)).